Consider the following 555-residue polypeptide: Tetracycline 7-halogenase (555 aa).

22–27 contributes to the FAD binding site; that stretch reads GSGLSG.

This sequence belongs to the flavin-dependent halogenase family. Bacterial tryptophan halogenase subfamily. As to quaternary structure, homodimer.

The enzyme catalyses tetracycline + FADH2 + chloride + O2 = 7-chlorotetracycline + FAD + 2 H2O + H(+). It participates in antibiotic biosynthesis. Functionally, involved in the biosynthesis of chlorotetracycline (CTC), an important member from antibiotics tetracycline (TC) family, which inhibits protein synthesis in bacteria and is widely involved in clinical therapy, animal feeds and aquaculture. Utilizes FADH(2) supplied by the flavin reductase CtcQ, to catalyze the chlorination of tetracycline (TC) at C7 position, leading to the production of 7-chlorotetracycline. The enzyme forms a lysine chloramine intermediate on an internal lysine residue before transferring the chlorine to the substrate. It is stereo-selective for the 4S (natural) isomer of tetracycline. This chain is Tetracycline 7-halogenase, found in Kitasatospora aureofaciens (Streptomyces aureofaciens).